We begin with the raw amino-acid sequence, 342 residues long: Renalase (342 aa).

Positions 1–17 (MAQVLIVGAGMTGSLCA) are cleaved as a signal peptide. Residues Thr-12, Arg-42, and 61–62 (QY) contribute to the FAD site.

This sequence belongs to the renalase family. The cofactor is FAD. As to expression, secreted into the blood by the kidney. Highly expressed in the kidney, expressed at lower level in heart, skeletal muscle and small intestine. Its plasma concentration is markedly reduced in patients with end-stage renal disease, as compared with healthy subjects.

The protein localises to the secreted. The catalysed reaction is 1,2-dihydro-beta-NAD + O2 + H(+) = H2O2 + NAD(+). It catalyses the reaction 1,2-dihydro-beta-NADP + O2 + H(+) = H2O2 + NADP(+). It carries out the reaction 1,6-dihydro-beta-NADP + O2 + H(+) = H2O2 + NADP(+). The enzyme catalyses 1,6-dihydro-beta-NAD + O2 + H(+) = H2O2 + NAD(+). Catalyzes the oxidation of the less abundant 1,2-dihydro-beta-NAD(P) and 1,6-dihydro-beta-NAD(P) to form beta-NAD(P)(+). The enzyme hormone is secreted by the kidney, and circulates in blood and modulates cardiac function and systemic blood pressure. Lowers blood pressure in vivo by decreasing cardiac contractility and heart rate and preventing a compensatory increase in peripheral vascular tone, suggesting a causal link to the increased plasma catecholamine and heightened cardiovascular risk. High concentrations of catecholamines activate plasma renalase and promotes its secretion and synthesis. This chain is Renalase (RNLS), found in Homo sapiens (Human).